Consider the following 153-residue polypeptide: Regulatory protein RecX (153 aa).

Belongs to the RecX family.

The protein localises to the cytoplasm. Its function is as follows. Modulates RecA activity. The protein is Regulatory protein RecX of Neisseria gonorrhoeae (strain ATCC 700825 / FA 1090).